A 126-amino-acid polypeptide reads, in one-letter code: 13 kDa ribonucleoprotein-associated protein (126 aa).

Belongs to the eukaryotic ribosomal protein eL8 family. Component of the U3 snoRNP particle. Binds to the C'/D and B/C motifs in U3 snoRNA. Component of the 25S U4/U6.U5 tri-snRNP particle, a subcomplex of the spliceosome. Binds to the 5' stem-loop of U4 snRNA.

It is found in the nucleus. Its subcellular location is the nucleolus. Common component of the spliceosome and rRNA processing machinery. In association with the spliceosomal U4/U6.U5 tri-snRNP particle, required for splicing of pre-mRNA. In association with box C/D snoRNPs, required for processing of pre-ribosomal RNA (rRNA) and site-specific 2'-O-methylation of substrate RNAs. Essential for the accumulation and stability of U4 snRNA, U6 snRNA, and box C/D snoRNAs. This is 13 kDa ribonucleoprotein-associated protein (SNU13) from Yarrowia lipolytica (strain CLIB 122 / E 150) (Yeast).